Here is a 78-residue protein sequence, read N- to C-terminus: Large ribosomal subunit protein bL28 (78 aa).

The protein belongs to the bacterial ribosomal protein bL28 family.

This Xylella fastidiosa (strain 9a5c) protein is Large ribosomal subunit protein bL28 (rpmB).